We begin with the raw amino-acid sequence, 392 residues long: Imidazolonepropionase (392 aa).

The Fe(3+) site is built by histidine 70 and histidine 72. Zn(2+) contacts are provided by histidine 70 and histidine 72. 4-imidazolone-5-propanoate contacts are provided by arginine 79, tyrosine 137, and histidine 164. Tyrosine 137 serves as a coordination point for N-formimidoyl-L-glutamate. Residue histidine 227 coordinates Fe(3+). A Zn(2+)-binding site is contributed by histidine 227. Glutamine 230 contributes to the 4-imidazolone-5-propanoate binding site. Aspartate 301 serves as a coordination point for Fe(3+). Aspartate 301 is a binding site for Zn(2+). Asparagine 303 and glycine 305 together coordinate N-formimidoyl-L-glutamate. 4-imidazolone-5-propanoate is bound at residue threonine 306.

It belongs to the metallo-dependent hydrolases superfamily. HutI family. It depends on Zn(2+) as a cofactor. Fe(3+) serves as cofactor.

Its subcellular location is the cytoplasm. It catalyses the reaction 4-imidazolone-5-propanoate + H2O = N-formimidoyl-L-glutamate. Its pathway is amino-acid degradation; L-histidine degradation into L-glutamate; N-formimidoyl-L-glutamate from L-histidine: step 3/3. Catalyzes the hydrolytic cleavage of the carbon-nitrogen bond in imidazolone-5-propanoate to yield N-formimidoyl-L-glutamate. It is the third step in the universal histidine degradation pathway. The sequence is that of Imidazolonepropionase from Nocardia farcinica (strain IFM 10152).